A 256-amino-acid polypeptide reads, in one-letter code: 5-keto-4-deoxy-D-glucarate aldolase (256 aa).

H50 serves as the catalytic Proton acceptor. Residue Q151 participates in substrate binding. Residue E153 coordinates Mg(2+). S178 and D179 together coordinate substrate. D179 serves as a coordination point for Mg(2+).

This sequence belongs to the HpcH/HpaI aldolase family. KDGluc aldolase subfamily. As to quaternary structure, homohexamer; trimer of dimers. The cofactor is Mg(2+).

The catalysed reaction is 5-dehydro-4-deoxy-D-glucarate = 2-hydroxy-3-oxopropanoate + pyruvate. It catalyses the reaction 2-dehydro-3-deoxy-D-glucarate = 2-hydroxy-3-oxopropanoate + pyruvate. It functions in the pathway carbohydrate acid metabolism; galactarate degradation; D-glycerate from galactarate: step 2/3. Its function is as follows. Catalyzes the reversible retro-aldol cleavage of both 5-keto-4-deoxy-D-glucarate and 2-keto-3-deoxy-D-glucarate to pyruvate and tartronic semialdehyde. The polypeptide is 5-keto-4-deoxy-D-glucarate aldolase (Escherichia fergusonii (strain ATCC 35469 / DSM 13698 / CCUG 18766 / IAM 14443 / JCM 21226 / LMG 7866 / NBRC 102419 / NCTC 12128 / CDC 0568-73)).